The chain runs to 362 residues: Alpha-glucoside transport ATP-binding protein AglK (362 aa).

The 232-residue stretch at 4–235 (LLLKDIRKSY…PANLFVARFI (232 aa)) folds into the ABC transporter domain. Position 36–43 (36–43 (GPSGCGKS)) interacts with ATP.

This sequence belongs to the ABC transporter superfamily.

It localises to the cell inner membrane. Functionally, part of the binding-protein-dependent transport system for alpha-glucosides such as sucrose, maltose and trehalose. Probably responsible for energy coupling to the transport system. The polypeptide is Alpha-glucoside transport ATP-binding protein AglK (aglK) (Rhizobium meliloti (strain 1021) (Ensifer meliloti)).